The sequence spans 170 residues: Crossover junction endodeoxyribonuclease RuvC (170 aa).

Active-site residues include aspartate 9, glutamate 70, and aspartate 145. Residues aspartate 9, glutamate 70, and aspartate 145 each coordinate Mg(2+).

This sequence belongs to the RuvC family. Homodimer which binds Holliday junction (HJ) DNA. The HJ becomes 2-fold symmetrical on binding to RuvC with unstacked arms; it has a different conformation from HJ DNA in complex with RuvA. In the full resolvosome a probable DNA-RuvA(4)-RuvB(12)-RuvC(2) complex forms which resolves the HJ. Mg(2+) serves as cofactor.

The protein localises to the cytoplasm. It catalyses the reaction Endonucleolytic cleavage at a junction such as a reciprocal single-stranded crossover between two homologous DNA duplexes (Holliday junction).. Functionally, the RuvA-RuvB-RuvC complex processes Holliday junction (HJ) DNA during genetic recombination and DNA repair. Endonuclease that resolves HJ intermediates. Cleaves cruciform DNA by making single-stranded nicks across the HJ at symmetrical positions within the homologous arms, yielding a 5'-phosphate and a 3'-hydroxyl group; requires a central core of homology in the junction. The consensus cleavage sequence is 5'-(A/T)TT(C/G)-3'. Cleavage occurs on the 3'-side of the TT dinucleotide at the point of strand exchange. HJ branch migration catalyzed by RuvA-RuvB allows RuvC to scan DNA until it finds its consensus sequence, where it cleaves and resolves the cruciform DNA. The protein is Crossover junction endodeoxyribonuclease RuvC of Chlamydia muridarum (strain MoPn / Nigg).